A 653-amino-acid chain; its full sequence is Aspartate--tRNA ligase, mitochondrial (653 aa).

The N-terminal 46 residues, Met-1 to Phe-46, are a transit peptide targeting the mitochondrion. Position 218 is a phosphothreonine (Thr-218). Ser-241 is subject to Phosphoserine. The aspartate stretch occupies residues Gln-243–Lys-246. An L-aspartate-binding site is contributed by Arg-265. Residues Arg-265–Glu-267 and Glu-534 contribute to the ATP site. L-aspartate is bound at residue Arg-541. Gly-583–Arg-586 is an ATP binding site.

Belongs to the class-II aminoacyl-tRNA synthetase family. Type 1 subfamily. Homodimer.

The protein resides in the mitochondrion matrix. The protein localises to the mitochondrion membrane. It carries out the reaction tRNA(Asp) + L-aspartate + ATP = L-aspartyl-tRNA(Asp) + AMP + diphosphate. In terms of biological role, catalyzes the attachment of aspartate to tRNA(Asp) in a two-step reaction: aspartate is first activated by ATP to form Asp-AMP and then transferred to the acceptor end of tRNA(Asp). This chain is Aspartate--tRNA ligase, mitochondrial (Dars2), found in Mus musculus (Mouse).